We begin with the raw amino-acid sequence, 1296 residues long: Clustered mitochondria protein homolog (1296 aa).

The tract at residues M1–E31 is disordered. The span at G8 to G26 shows a compositional bias: basic and acidic residues. The Clu domain occupies R333–L575. Residues L662–V689 are a coiled coil. 4 TPR repeats span residues A970 to V1003, C1012 to I1045, A1096 to Y1129, and A1138 to Q1171. Residues Q1242–E1274 adopt a coiled-coil conformation. The tract at residues A1261 to D1296 is disordered. Basic and acidic residues predominate over residues K1263–E1276. Polar residues predominate over residues S1278–D1296.

It belongs to the CLU family.

Its subcellular location is the cytoplasm. The protein localises to the cytoplasmic granule. Its function is as follows. mRNA-binding protein involved in proper cytoplasmic distribution of mitochondria. Specifically binds mRNAs of nuclear-encoded mitochondrial proteins in the cytoplasm and regulates transport or translation of these transcripts close to mitochondria, playing a role in mitochondrial biogenesis. The polypeptide is Clustered mitochondria protein homolog (Xenopus tropicalis (Western clawed frog)).